Reading from the N-terminus, the 35-residue chain is Alpha-amanitin proprotein 1 (35 aa).

Positions 1 to 10 are excised as a propeptide; the sequence is MSDINATRLP. A (3R,4R)-4,5-dihydroxyisoleucine; in form alpha-amanitin modification is found at Ile-11. Ile-11 carries the post-translational modification (3R,4S)-4-hydroxyisoleucine; in form gamma-amanitin. Positions 11 to 18 form a cross-link, cyclopeptide (Ile-Pro); it reads IWGIGCNP. Residues 12-16 constitute a cross-link (2'-cysteinyl-6'-hydroxytryptophan sulfoxide (Trp-Cys)); it reads WGIGC. Pro-18 is modified (4-hydroxyproline). Positions 19–35 are excised as a propeptide; it reads CVGDDVTSVLTRGEALC.

Belongs to the MSDIN fungal toxin family. Post-translationally, processed by the macrocyclase-peptidase enzyme POPB to yield a toxic cyclic octapeptide. POPB first removes 10 residues from the N-terminus. Conformational trapping of the remaining peptide forces the enzyme to release this intermediate rather than proceed to macrocyclization. The enzyme rebinds the remaining peptide in a different conformation and catalyzes macrocyclization of the N-terminal 8 residues. As to expression, expressed in basidiocarps.

In terms of biological role, major toxin belonging to the bicyclic octapeptides amatoxins that acts by binding non-competitively to RNA polymerase II and greatly slowing the elongation of transcripts from target promoters. The polypeptide is Alpha-amanitin proprotein 1 (Amanita exitialis (Guangzhou destroying angel)).